The primary structure comprises 147 residues: Large ribosomal subunit protein uL13 (147 aa).

This sequence belongs to the universal ribosomal protein uL13 family. As to quaternary structure, part of the 50S ribosomal subunit.

Its function is as follows. This protein is one of the early assembly proteins of the 50S ribosomal subunit, although it is not seen to bind rRNA by itself. It is important during the early stages of 50S assembly. In Lactiplantibacillus plantarum (strain ATCC BAA-793 / NCIMB 8826 / WCFS1) (Lactobacillus plantarum), this protein is Large ribosomal subunit protein uL13.